The primary structure comprises 146 residues: MTLTKGSFTYSSGEEYRGEWKEGRRHGFGQLVFADGGTYLGHFENGLFNGFGVLTFSDGSRYEGEFSQGKFNGVGVFIRYDNMTFEGEFKNGRVDGFGLLTFPDGSHGIPRNEGLFENNKLLRREKCSAVVQRAQSASKSARNLTA.

MORN repeat units follow at residues 16–38 (YRGE…DGGT), 39–61 (YLGH…DGSR), 62–84 (YEGE…DNMT), and 85–107 (FEGE…DGSH).

In terms of assembly, interacts with MYO3A.

The protein localises to the cytoplasm. Its subcellular location is the cell projection. The protein resides in the filopodium tip. It localises to the stereocilium. In terms of biological role, plays a role in promoting axonal degeneration following neuronal injury by toxic insult or trauma. The chain is MORN repeat-containing protein 4 (Morn4) from Mus musculus (Mouse).